Consider the following 290-residue polypeptide: MSVYYGSIEAGGTKFVLAIADEHFNIIKKFKFATTTPQETISKTIKYFKENRVSAIGLGSFGPIDLNLSSKTYGYITSTPKVGWKNINLVGQLKEALDIPIYFTTDVNASAYGEMKNTGIKNLVYLTIGTGIGGGAIQNGYFIGGIGHSEMGHQRINRHRDVLTFEGICPFHGDCLEGVAAGPSLEARTGILGEKISSDDPIWDILSYYIAQAAINATLTLAPECIILGGGVMEKPNMISLIQKQFISMLNNYIDLPCSVEKYIRLPTVKENGSATLGNFYLAYSLFTKE.

Thr130 provides a ligand contact to ATP. Positions 153, 169, 172, and 175 each coordinate Zn(2+). ATP-binding positions include Pro183 and 231 to 235 (GVMEK).

This sequence belongs to the ROK (NagC/XylR) family. Homodimer. Mg(2+) serves as cofactor.

It catalyses the reaction D-fructose + ATP = D-fructose 6-phosphate + ADP + H(+). Inactivated by EDTA. Inhibition by zinc ions (Potential). This Lactococcus lactis subsp. cremoris (Streptococcus cremoris) protein is Fructokinase (scrK).